Reading from the N-terminus, the 1337-residue chain is Receptor-type tyrosine-protein phosphatase eta (1337 aa).

Positions Met-1 to Cys-35 are cleaved as a signal peptide. The Extracellular segment spans residues Ala-36–Gly-975. Composition is skewed to polar residues over residues Ser-67–Asn-82 and Ser-89–Pro-119. The disordered stretch occupies residues Ser-67–Asp-124. Asn-72, Asn-82, Asn-93, Asn-104, Asn-142, Asn-172, Asn-192, Asn-231, Asn-258, Asn-278, Asn-342, Asn-351, Asn-376, Asn-391, Asn-396, Asn-413, Asn-431, Asn-501, Asn-525, Asn-536, Asn-582, Asn-603, Asn-618, Asn-628, Asn-637, Asn-666, Asn-669, Asn-761, Asn-772, Asn-784, Asn-790, Asn-824, Asn-910, and Asn-937 each carry an N-linked (GlcNAc...) asparagine glycan. Fibronectin type-III domains lie at Pro-121 to Pro-209, Pro-207 to Leu-291, Asn-271 to Thr-364, Gln-368 to Pro-456, Val-457 to Ser-541, Ala-542 to Tyr-623, Arg-625 to Ala-720, Ser-721 to Pro-817, and Pro-816 to Leu-902. Positions Asn-278–Asp-327 are disordered. A helical membrane pass occupies residues Ala-976–Trp-996. Residues Arg-997–Ala-1337 lie on the Cytoplasmic side of the membrane. Ser-1009 carries the phosphoserine modification. Positions Phe-1041–Ile-1298 constitute a Tyrosine-protein phosphatase domain. Substrate contacts are provided by residues Asp-1205, Cys-1239–Arg-1245, and Gln-1283. Residue Cys-1239 is the Phosphocysteine intermediate of the active site.

It belongs to the protein-tyrosine phosphatase family. Receptor class 3 subfamily. As to quaternary structure, monomer. Interacts with CTNNB1 (phosphorylated) and JUP (phosphorylated). Interacts with FLT3 (phosphorylated). Interacts with GAB1 and GRB2. Post-translationally, N- and O-glycosylated. In terms of processing, N-glycosylated. As to expression, expressed in the promyelocytic cell line HL-60, the granulocyte-macrophage colony-stimulating factor-dependent leukemic cell line F-36P, and the IL3 and erythropoietin-dependent leukemic cell line F-36E. Expressed predominantly in epithelial cells and lymphocytes. Enhanced expression at high cell density. Expressed in the brain.

The protein localises to the cell membrane. It is found in the cell projection. It localises to the ruffle membrane. The protein resides in the cell junction. Its subcellular location is the secreted. The protein localises to the extracellular space. It carries out the reaction O-phospho-L-tyrosyl-[protein] + H2O = L-tyrosyl-[protein] + phosphate. In terms of biological role, tyrosine phosphatase which dephosphorylates or contributes to the dephosphorylation of CTNND1, FLT3, PDGFRB, MET, KDR, LYN, SRC, MAPK1, MAPK3, EGFR, TJP1, OCLN, PIK3R1 and PIK3R2. Plays a role in cell adhesion, migration, proliferation and differentiation. Has a role in megakaryocytes and platelet formation. Involved in vascular development. Regulator of macrophage adhesion and spreading. Positively affects cell-matrix adhesion. Positive regulator of platelet activation and thrombosis. Negative regulator of cell proliferation. Negative regulator of PDGF-stimulated cell migration; through dephosphorylation of PDGFR. Positive regulator of endothelial cell survival, as well as of VEGF-induced SRC and AKT activation; through KDR dephosphorylation. Negative regulator of EGFR signaling pathway; through EGFR dephosphorylation. Enhances the barrier function of epithelial junctions during reassembly. Negatively regulates T-cell receptor (TCR) signaling. Upon T-cell TCR activation, it is up-regulated and excluded from the immunological synapses, while upon T-cell-antigen presenting cells (APC) disengagement, it is no longer excluded and can dephosphorylate PLCG1 and LAT to down-regulate prolongation of signaling. Its function is as follows. Activates angiogenesis and cell migration. Downregulates the expression of the endothelial adhesion molecules ICAM1 and VCAM1. The chain is Receptor-type tyrosine-protein phosphatase eta (PTPRJ) from Homo sapiens (Human).